Here is a 262-residue protein sequence, read N- to C-terminus: Probable carboxylesterase Culp3 (262 aa).

Positions 1 to 41 (MNNRPIRLLTSGRAGLGAGALITAVVLLIALGAVWTPVAFA) are cleaved as a signal peptide. C44 and C114 are joined by a disulfide. S125 serves as the catalytic Nucleophile. A disulfide bridge connects residues C188 and C195. D192 is a catalytic residue. H206 serves as the catalytic Proton donor/acceptor. The tract at residues 241-262 (LPGSVLQMPGTAAPAPESLHGR) is disordered.

The protein belongs to the cutinase family.

Its subcellular location is the secreted. Its function is as follows. Shows weak esterase activity with the p-nitrophenol-linked aliphatic ester pNP-butyrate. Does not exhibit cutinase activity. The protein is Probable carboxylesterase Culp3 (cut3) of Mycobacterium tuberculosis (strain ATCC 25618 / H37Rv).